Consider the following 481-residue polypeptide: UDP-glucose 6-dehydrogenase (481 aa).

NAD(+) is bound by residues 16–21, aspartate 41, lysine 46, 94–98, 135–136, and glutamate 172; these read GAGYVG, VNTPT, and ST. Substrate contacts are provided by residues 168–172, 227–231, arginine 267, and 274–280; these read EFLAE, KLVAN, and QASVGFG. The active-site Nucleophile is cysteine 283. Residue 283-286 participates in NAD(+) binding; it reads CFQK. 345 to 346 contributes to the substrate binding site; it reads FK. Arginine 353 is a binding site for NAD(+). Arginine 447 provides a ligand contact to substrate.

It belongs to the UDP-glucose/GDP-mannose dehydrogenase family. As to expression, expressed in the vulva and in oocytes.

The catalysed reaction is UDP-alpha-D-glucose + 2 NAD(+) + H2O = UDP-alpha-D-glucuronate + 2 NADH + 3 H(+). It participates in nucleotide-sugar biosynthesis; UDP-alpha-D-glucuronate biosynthesis; UDP-alpha-D-glucuronate from UDP-alpha-D-glucose: step 1/1. Involved in the biosynthesis of glycosaminoglycans; hyaluronan, chondroitin sulfate, and heparan sulfate. The sequence is that of UDP-glucose 6-dehydrogenase (sqv-4) from Caenorhabditis elegans.